A 124-amino-acid chain; its full sequence is Small ribosomal subunit protein bS6 (124 aa).

The segment at 93-124 is disordered; the sequence is KKAETGPSSMMKTVEREEARKAQQAEYAANNS. The span at 105–115 shows a compositional bias: basic and acidic residues; it reads TVEREEARKAQ.

The protein belongs to the bacterial ribosomal protein bS6 family.

In terms of biological role, binds together with bS18 to 16S ribosomal RNA. In Variovorax paradoxus (strain S110), this protein is Small ribosomal subunit protein bS6.